The following is a 427-amino-acid chain: Dorsalin-1 (427 aa).

The N-terminal stretch at 1–20 (MHYFGVLAALSVFNIIACLT) is a signal peptide. Positions 21 to 318 (RGKPLENWKK…PRQHSSRSKR (298 aa)) are excised as a propeptide. 4 N-linked (GlcNAc...) asparagine glycosylation sites follow: Asn71, Asn136, Asn265, and Asn292. Residues 288–321 (KLGKNDSSSEEEQREEKAIARPRQHSSRSKRSIG) form a disordered region. Residues 307–321 (ARPRQHSSRSKRSIG) show a composition bias toward basic residues. 3 cysteine pairs are disulfide-bonded: Cys325/Cys391, Cys354/Cys424, and Cys358/Cys426.

The protein belongs to the TGF-beta family. In terms of assembly, homodimer; disulfide-linked. Expressed selectively in the dorsal neural tube. Lower levels seen in kidney and myotomal cells.

The protein resides in the secreted. Functionally, appears to regulate cell differentiation within the neural tube. May regulate the differentiation of cell types along the dorsoventral axis of the neural tube, acting in conjunction with distinct ventralizing signals from the notochord and floor plate. Controls the cell differentiation in the neural tube in several ways: (1) promotes the differentiation of cell types that derive from the dorsal neural tube. (2) ensures that the dorsal neural tube is refractory to ventralizing species from the notochord. (3) can diffuse and influence the fate of cells in more ventral regions of the neural tube. The protein is Dorsalin-1 (DSL1) of Gallus gallus (Chicken).